We begin with the raw amino-acid sequence, 488 residues long: Kynurenine 3-monooxygenase 2 (488 aa).

The protein belongs to the aromatic-ring hydroxylase family. KMO subfamily. Requires FAD as cofactor.

It localises to the mitochondrion outer membrane. The catalysed reaction is L-kynurenine + NADPH + O2 + H(+) = 3-hydroxy-L-kynurenine + NADP(+) + H2O. It functions in the pathway cofactor biosynthesis; NAD(+) biosynthesis; quinolinate from L-kynurenine: step 1/3. Its function is as follows. Catalyzes the hydroxylation of L-kynurenine (L-Kyn) to form 3-hydroxy-L-kynurenine (L-3OHKyn). Required for synthesis of quinolinic acid. This Aspergillus niger (strain ATCC MYA-4892 / CBS 513.88 / FGSC A1513) protein is Kynurenine 3-monooxygenase 2 (bna4-2).